The following is a 105-amino-acid chain: Secreted RxLR effector protein 158 (105 aa).

A signal peptide spans Met-1 to Gly-22. Residues Arg-50–Arg-71 carry the RxLR-dEER motif.

This sequence belongs to the RxLR effector family.

The protein resides in the secreted. It is found in the host nucleus. It localises to the host cytoplasm. Secreted effector that partially suppresses the host cell death induced by cell death-inducing proteins. In Plasmopara viticola (Downy mildew of grapevine), this protein is Secreted RxLR effector protein 158.